We begin with the raw amino-acid sequence, 320 residues long: L-lactate dehydrogenase 2 (320 aa).

Valine 16, aspartate 37, lysine 42, and tyrosine 69 together coordinate NAD(+). Residue arginine 94 coordinates substrate. Residues serine 107, 124–126 (VTN), and threonine 149 each bind NAD(+). Residue 126–129 (NPVD) participates in substrate binding. 154 to 157 (DTAR) lines the substrate pocket. Arginine 159 and histidine 174 together coordinate beta-D-fructose 1,6-bisphosphate. The active-site Proton acceptor is the histidine 181. Residue threonine 235 participates in substrate binding.

This sequence belongs to the LDH/MDH superfamily. LDH family. Homotetramer.

It is found in the cytoplasm. It carries out the reaction (S)-lactate + NAD(+) = pyruvate + NADH + H(+). It participates in fermentation; pyruvate fermentation to lactate; (S)-lactate from pyruvate: step 1/1. Allosterically activated by fructose 1,6-bisphosphate (FBP). Catalyzes the conversion of lactate to pyruvate. The sequence is that of L-lactate dehydrogenase 2 from Clostridium acetobutylicum (strain ATCC 824 / DSM 792 / JCM 1419 / IAM 19013 / LMG 5710 / NBRC 13948 / NRRL B-527 / VKM B-1787 / 2291 / W).